The chain runs to 363 residues: Probable iron/ascorbate oxidoreductase DDB_G0283291 (363 aa).

Residues 197-306 (IFNYPSIISS…RISFPLFFDP (110 aa)) enclose the Fe2OG dioxygenase domain. Fe cation contacts are provided by His-230, Asp-232, and His-286. Position 297 (Arg-297) interacts with 2-oxoglutarate.

Belongs to the iron/ascorbate-dependent oxidoreductase family. Fe(2+) is required as a cofactor.

This chain is Probable iron/ascorbate oxidoreductase DDB_G0283291, found in Dictyostelium discoideum (Social amoeba).